Here is a 409-residue protein sequence, read N- to C-terminus: S-adenosylmethionine synthase (409 aa).

141–146 contributes to the ATP binding site; the sequence is GQGSAD.

This sequence belongs to the AdoMet synthase 2 family. Mg(2+) is required as a cofactor.

It catalyses the reaction L-methionine + ATP + H2O = S-adenosyl-L-methionine + phosphate + diphosphate. It functions in the pathway amino-acid biosynthesis; S-adenosyl-L-methionine biosynthesis; S-adenosyl-L-methionine from L-methionine: step 1/1. Its function is as follows. Catalyzes the formation of S-adenosylmethionine from methionine and ATP. The sequence is that of S-adenosylmethionine synthase from Hyperthermus butylicus (strain DSM 5456 / JCM 9403 / PLM1-5).